The chain runs to 388 residues: Phosphopentomutase (388 aa).

Positions 10, 282, 287, 323, 324, and 335 each coordinate Mn(2+).

It belongs to the phosphopentomutase family. Requires Mn(2+) as cofactor.

Its subcellular location is the cytoplasm. The catalysed reaction is 2-deoxy-alpha-D-ribose 1-phosphate = 2-deoxy-D-ribose 5-phosphate. It carries out the reaction alpha-D-ribose 1-phosphate = D-ribose 5-phosphate. The protein operates within carbohydrate degradation; 2-deoxy-D-ribose 1-phosphate degradation; D-glyceraldehyde 3-phosphate and acetaldehyde from 2-deoxy-alpha-D-ribose 1-phosphate: step 1/2. Functionally, isomerase that catalyzes the conversion of deoxy-ribose 1-phosphate (dRib-1-P) and ribose 1-phosphate (Rib-1-P) to deoxy-ribose 5-phosphate (dRib-5-P) and ribose 5-phosphate (Rib-5-P), respectively. This chain is Phosphopentomutase, found in Desulfitobacterium hafniense (strain DSM 10664 / DCB-2).